A 188-amino-acid polypeptide reads, in one-letter code: Putative manganese efflux pump MntP (188 aa).

Helical transmembrane passes span 2-22 (LYIEVLLLAIGLSMDSLAVSV), 40-60 (IASVLGIFQAGMTVIGYTMGL), 66-86 (ICAFDHWIAFTLLLYLGGKMI), 107-127 (LCGLGIATSIDALAVGISLAI), 133-153 (LLQASTIGVVTFAISAFGVYF), and 167-187 (LIGGLILIGIGTKILIEHLFF).

This sequence belongs to the MntP (TC 9.B.29) family.

Its subcellular location is the cell inner membrane. In terms of biological role, probably functions as a manganese efflux pump. This chain is Putative manganese efflux pump MntP, found in Parabacteroides distasonis (strain ATCC 8503 / DSM 20701 / CIP 104284 / JCM 5825 / NCTC 11152).